The sequence spans 410 residues: uncharacterized protein (410 aa).

An N-terminal signal peptide occupies residues 1 to 41 (MVKSFRMKALIAGAAVAAAVSAGAVSDVPAAKVLQPTAAYA).

Interacts with PcrA, Pdp, YclM, YkvL, YhcQ and YomL. The interaction with PcrA is not essential for cell viability or repair of UV-induced lesions.

The protein resides in the secreted. Its function is as follows. Increases the processivity of the PcrA helicase, but does not bind to DNA. This is an uncharacterized protein from Bacillus subtilis (strain 168).